The following is a 96-amino-acid chain: UPF0235 protein Acid345_4205 (96 aa).

It belongs to the UPF0235 family.

In Koribacter versatilis (strain Ellin345), this protein is UPF0235 protein Acid345_4205.